The primary structure comprises 289 residues: MLTPYAYHLVNVFAETYFGGNPLAVFPQADGLTDQQMQLIARQFNLSETVFVHQTTESSAVRKLRIFTPDYELPFAGHPTIGAAFVLHQQLNLPETYLLQTQAGLVKLFHEAKQICFGLQNHIDVEVIDDNLPQYTQLLGLSESDIAQIAWINTGSRQLLIQLTSLNALKTCQIHPALFQQIVKQSALYLWFVEQNQANVRLFFGSNGAVVEDPGTGSAAANLGGLCLKNGLTPLNWRIYQGDEIQRPNRLTLQVDESETIYVGGKVIAVGCGELFVPSGEGEPSQGCR.

Residue Glu-48 is part of the active site.

The protein belongs to the PhzF family.

This is an uncharacterized protein from Pasteurella multocida (strain Pm70).